A 252-amino-acid chain; its full sequence is Triosephosphate isomerase (252 aa).

Residue 9 to 11 (NWK) participates in substrate binding. His-100 serves as the catalytic Electrophile. The Proton acceptor role is filled by Glu-171. Residues Gly-177, Ser-216, and 237–238 (GG) contribute to the substrate site.

Belongs to the triosephosphate isomerase family. In terms of assembly, homodimer.

The protein localises to the cytoplasm. The enzyme catalyses D-glyceraldehyde 3-phosphate = dihydroxyacetone phosphate. It functions in the pathway carbohydrate biosynthesis; gluconeogenesis. Its pathway is carbohydrate degradation; glycolysis; D-glyceraldehyde 3-phosphate from glycerone phosphate: step 1/1. Involved in the gluconeogenesis. Catalyzes stereospecifically the conversion of dihydroxyacetone phosphate (DHAP) to D-glyceraldehyde-3-phosphate (G3P). The protein is Triosephosphate isomerase of Polynucleobacter asymbioticus (strain DSM 18221 / CIP 109841 / QLW-P1DMWA-1) (Polynucleobacter necessarius subsp. asymbioticus).